The following is a 608-amino-acid chain: Phosphoenolpyruvate carboxykinase [GTP] (608 aa).

Substrate contacts are provided by residues R82 and 222–224 (YGG). Residues K231 and H251 each coordinate Mn(2+). S273 is a binding site for substrate. 274–279 (ACGKTN) is a GTP binding site. The active site involves C275. D298 contributes to the Mn(2+) binding site. 389–391 (NSR) is a binding site for substrate. Residues R391, R422, and 517–520 (FGDN) contribute to the GTP site.

Belongs to the phosphoenolpyruvate carboxykinase [GTP] family. As to quaternary structure, monomer. Mn(2+) serves as cofactor.

The protein localises to the cytoplasm. The catalysed reaction is oxaloacetate + GTP = phosphoenolpyruvate + GDP + CO2. It participates in carbohydrate biosynthesis; gluconeogenesis. In terms of biological role, catalyzes the conversion of oxaloacetate (OAA) to phosphoenolpyruvate (PEP), the rate-limiting step in the metabolic pathway that produces glucose from lactate and other precursors derived from the citric acid cycle. This Paenarthrobacter aurescens (strain TC1) protein is Phosphoenolpyruvate carboxykinase [GTP].